Here is a 649-residue protein sequence, read N- to C-terminus: 1-deoxy-D-xylulose-5-phosphate synthase (649 aa).

Residues histidine 73 and 114–116 (SHA) each bind thiamine diphosphate. Aspartate 145 is a Mg(2+) binding site. Thiamine diphosphate-binding positions include 146 to 147 (GA), asparagine 175, tyrosine 286, and glutamate 367. Asparagine 175 serves as a coordination point for Mg(2+).

It belongs to the transketolase family. DXPS subfamily. In terms of assembly, homodimer. Mg(2+) is required as a cofactor. The cofactor is thiamine diphosphate.

The catalysed reaction is D-glyceraldehyde 3-phosphate + pyruvate + H(+) = 1-deoxy-D-xylulose 5-phosphate + CO2. Its pathway is metabolic intermediate biosynthesis; 1-deoxy-D-xylulose 5-phosphate biosynthesis; 1-deoxy-D-xylulose 5-phosphate from D-glyceraldehyde 3-phosphate and pyruvate: step 1/1. In terms of biological role, catalyzes the acyloin condensation reaction between C atoms 2 and 3 of pyruvate and glyceraldehyde 3-phosphate to yield 1-deoxy-D-xylulose-5-phosphate (DXP). The polypeptide is 1-deoxy-D-xylulose-5-phosphate synthase (Rhodococcus jostii (strain RHA1)).